The chain runs to 369 residues: Flagellar P-ring protein 1 (369 aa).

The first 23 residues, 1–23 (MRKQSLVTLLMVLLSLVWLPASA), serve as a signal peptide directing secretion.

The protein belongs to the FlgI family. In terms of assembly, the basal body constitutes a major portion of the flagellar organelle and consists of four rings (L,P,S, and M) mounted on a central rod.

It localises to the periplasm. The protein resides in the bacterial flagellum basal body. Functionally, assembles around the rod to form the L-ring and probably protects the motor/basal body from shearing forces during rotation. This chain is Flagellar P-ring protein 1, found in Yersinia pseudotuberculosis serotype I (strain IP32953).